The following is a 280-amino-acid chain: Pantothenate synthetase (280 aa).

Residue 31-38 (MGNLHAGH) participates in ATP binding. Residue His38 is the Proton donor of the active site. Gln62 provides a ligand contact to (R)-pantoate. Gln62 contacts beta-alanine. 150–153 (GKKD) lines the ATP pocket. Gln156 lines the (R)-pantoate pocket. Residues Val179 and 187–190 (MSSR) each bind ATP.

It belongs to the pantothenate synthetase family. As to quaternary structure, homodimer.

It is found in the cytoplasm. The catalysed reaction is (R)-pantoate + beta-alanine + ATP = (R)-pantothenate + AMP + diphosphate + H(+). It participates in cofactor biosynthesis; (R)-pantothenate biosynthesis; (R)-pantothenate from (R)-pantoate and beta-alanine: step 1/1. In terms of biological role, catalyzes the condensation of pantoate with beta-alanine in an ATP-dependent reaction via a pantoyl-adenylate intermediate. In Xanthomonas axonopodis pv. citri (strain 306), this protein is Pantothenate synthetase.